The following is a 290-amino-acid chain: Porphobilinogen deaminase (290 aa).

Cysteine 237 is modified (S-(dipyrrolylmethanemethyl)cysteine).

This sequence belongs to the HMBS family. Monomer. Requires dipyrromethane as cofactor.

The catalysed reaction is 4 porphobilinogen + H2O = hydroxymethylbilane + 4 NH4(+). It functions in the pathway porphyrin-containing compound metabolism; protoporphyrin-IX biosynthesis; coproporphyrinogen-III from 5-aminolevulinate: step 2/4. Its function is as follows. Tetrapolymerization of the monopyrrole PBG into the hydroxymethylbilane pre-uroporphyrinogen in several discrete steps. This chain is Porphobilinogen deaminase, found in Clostridium botulinum (strain Kyoto / Type A2).